Consider the following 364-residue polypeptide: DNA polymerase IV (364 aa).

Residues 14 to 198 form the UmuC domain; the sequence is IIHIDMDAFF…LPIEKFHGVG (185 aa). The Mg(2+) site is built by Asp18 and Asp116. Residue Glu117 is part of the active site.

It belongs to the DNA polymerase type-Y family. In terms of assembly, monomer. It depends on Mg(2+) as a cofactor.

It is found in the cytoplasm. The catalysed reaction is DNA(n) + a 2'-deoxyribonucleoside 5'-triphosphate = DNA(n+1) + diphosphate. Poorly processive, error-prone DNA polymerase involved in untargeted mutagenesis. Copies undamaged DNA at stalled replication forks, which arise in vivo from mismatched or misaligned primer ends. These misaligned primers can be extended by PolIV. Exhibits no 3'-5' exonuclease (proofreading) activity. May be involved in translesional synthesis, in conjunction with the beta clamp from PolIII. This is DNA polymerase IV from Streptococcus pyogenes serotype M2 (strain MGAS10270).